We begin with the raw amino-acid sequence, 85 residues long: Small ribosomal subunit protein bS18 (85 aa).

The protein belongs to the bacterial ribosomal protein bS18 family. As to quaternary structure, part of the 30S ribosomal subunit. Forms a tight heterodimer with protein bS6.

In terms of biological role, binds as a heterodimer with protein bS6 to the central domain of the 16S rRNA, where it helps stabilize the platform of the 30S subunit. This is Small ribosomal subunit protein bS18 from Helicobacter pylori (strain P12).